Consider the following 297-residue polypeptide: 4-diphosphocytidyl-2-C-methyl-D-erythritol kinase (297 aa).

Active-site residues include lysine 6 and aspartate 144.

This sequence belongs to the GHMP kinase family. IspE subfamily.

The enzyme catalyses 4-CDP-2-C-methyl-D-erythritol + ATP = 4-CDP-2-C-methyl-D-erythritol 2-phosphate + ADP + H(+). It participates in isoprenoid biosynthesis; isopentenyl diphosphate biosynthesis via DXP pathway; isopentenyl diphosphate from 1-deoxy-D-xylulose 5-phosphate: step 3/6. Functionally, catalyzes the phosphorylation of the position 2 hydroxy group of 4-diphosphocytidyl-2C-methyl-D-erythritol. This is 4-diphosphocytidyl-2-C-methyl-D-erythritol kinase from Leptospira interrogans serogroup Icterohaemorrhagiae serovar copenhageni (strain Fiocruz L1-130).